Here is a 198-residue protein sequence, read N- to C-terminus: Dual specificity protein phosphatase 14 (198 aa).

A Tyrosine-protein phosphatase domain is found at 26–167 (GIAQITSSLF…LIDYERQLFG (142 aa)). Catalysis depends on C111, which acts as the Phosphocysteine intermediate.

The protein belongs to the protein-tyrosine phosphatase family. Non-receptor class dual specificity subfamily. In terms of assembly, interacts with CD28.

The enzyme catalyses O-phospho-L-tyrosyl-[protein] + H2O = L-tyrosyl-[protein] + phosphate. It carries out the reaction O-phospho-L-seryl-[protein] + H2O = L-seryl-[protein] + phosphate. It catalyses the reaction O-phospho-L-threonyl-[protein] + H2O = L-threonyl-[protein] + phosphate. Its function is as follows. Involved in the inactivation of MAP kinases. Dephosphorylates ERK, JNK and p38 MAP-kinases. Plays a negative role in TCR signaling by dephosphorylating MAP3K7 adapter TAB1 leading to its inactivation. The polypeptide is Dual specificity protein phosphatase 14 (DUSP14) (Homo sapiens (Human)).